Consider the following 348-residue polypeptide: N6-Methyl-AMP deaminase (348 aa).

Zn(2+)-binding residues include His18 and His20. Residues His20, Asn22, His68, 100-103 (STPR), Asp142, and Gly175 each bind N(6)-methyl-AMP. His202 contacts Zn(2+). The N(6)-methyl-AMP site is built by Glu205, Asp287, and Asp288. The active-site Proton donor is Glu205. Asp287 provides a ligand contact to Zn(2+).

This sequence belongs to the metallo-dependent hydrolases superfamily. Adenosine and AMP deaminases family. Monomer. Requires Zn(2+) as cofactor.

The enzyme catalyses N(6)-methyl-AMP + H2O + H(+) = IMP + methylamine. In terms of biological role, catalyzes the hydrolysis of the free cytosolic methylated adenosine nucleotide N(6)-methyl-AMP (N6-mAMP) to produce inositol monophosphate (IMP) and methylamine. Is required for the catabolism of cytosolic N6-mAMP, which is derived from the degradation of mRNA containing N6-methylated adenine (m6A). The protein is N6-Methyl-AMP deaminase (mapda) of Danio rerio (Zebrafish).